The sequence spans 358 residues: Na(+)/H(+) exchange regulatory cofactor NHE-RF1 (358 aa).

N-acetylserine is present on Ser-2. A phosphoserine mark is found at Ser-2 and Ser-46. Residues 14–94 (LCCLEKGPNG…AVRLLVVDPE (81 aa)) form the PDZ 1 domain. Residues 114 to 134 (QETPGQAEPAAAAEAQGAGNE) show a composition bias toward low complexity. Disordered stretches follow at residues 114–192 (QETP…EASG) and 269–358 (SREA…FSNL). Over residues 135–149 (NEPREADKSHPEQRK) the composition is skewed to basic and acidic residues. In terms of domain architecture, PDZ 2 spans 154-234 (LCTMKKGPSG…ETKLLVVDRE (81 aa)). Phosphoserine occurs at positions 162, 269, 280, 290, and 291. Over residues 287–306 (RSASSDTSEELNSQDSPPKQ) the composition is skewed to polar residues. Thr-293 is modified (phosphothreonine). 3 positions are modified to phosphoserine: Ser-294, Ser-299, and Ser-302. Positions 307–319 (DSTAPSSTSSSDP) are enriched in low complexity. A compositionally biased stretch (basic and acidic residues) spans 348–358 (WSKKNELFSNL).

In terms of assembly, homodimer, and heterodimer with NHERF2. Binds the N-termini of EZR, RDX and MSN. Binds the C-termini of PDGFRA, PDGFRB, ADRB2, NOS2 and CFTR. Binds ARHGAP17, EPI64, RACK1, OPRK1, GNAQ, CTNNB1 and PLCB3. Binds PDZK1. Interacts with CLCN3. Binds the C-terminus of PAG1. In resting T-cells, part of a PAG1-NHERF1-MSN complex which is disrupted upon TCR activation. Forms a complex with CFTR and SLC4A7. Forms a complex with SLC4A7 and ATP6V1B1. Interacts with TRPC4 (via the PDZ-binding domain). Directly interacts with HTR4. Interacts (via the PDZ 1 domain) with PODXL (via the C-terminal PDZ-binding motif DTHL); interaction is not detected in glomerular epithelium cells. Interacts (via the PDZ 1 domain) with PODXL (via the C-terminal PDZ-binding motif DTHL); the interaction take place early in the secretory pathway and is necessary for its apical membrane sorting. Interacts with SLC26A3. Interacts with MCC. Interacts with SLC34A1. Interacts (via the PDZ domains) with SLC26A6 isoform 4 and isoform 5. Interacts (via PDZ domains) with ACE2 (via PDZ-binding motif); the interaction may enhance ACE2 membrane residence. Phosphorylated on serine residues.

Its subcellular location is the cytoplasm. The protein localises to the apical cell membrane. The protein resides in the endomembrane system. It is found in the cell projection. It localises to the filopodium. Its subcellular location is the ruffle. The protein localises to the microvillus. Its function is as follows. Scaffold protein that connects plasma membrane proteins with members of the ezrin/moesin/radixin family and thereby helps to link them to the actin cytoskeleton and to regulate their surface expression. Necessary for recycling of internalized ADRB2. Was first known to play a role in the regulation of the activity and subcellular location of SLC9A3. Necessary for cAMP-mediated phosphorylation and inhibition of SLC9A3. Involved in sperm capacitation. May participate in the regulation of the chloride and bicarbonate homeostasis in spermatozoa. May enhance Wnt signaling. May participate in HTR4 targeting to microvilli. Involved in the regulation of phosphate reabsorption in the renal proximal tubules. This chain is Na(+)/H(+) exchange regulatory cofactor NHE-RF1 (NHERF1), found in Macaca fascicularis (Crab-eating macaque).